Consider the following 78-residue polypeptide: Large ribosomal subunit protein bL28 (78 aa).

The tract at residues 1-21 (MSRVCQLSGKRANNGMAVSHS) is disordered.

It belongs to the bacterial ribosomal protein bL28 family.

The sequence is that of Large ribosomal subunit protein bL28 from Synechococcus sp. (strain RCC307).